A 195-amino-acid chain; its full sequence is MNLIPTVIETTNRGERAYDIYSRLLKDRIIMLGSAIDDNVANSIVSQLLFLQAQDSEKDIYLYINSPGGSVTAGFAIYDTIQHIKPDVQTICIGMAASMGSFLLAAGAKGKRFALPNAEVMIHQPLGGAQGQATEIEIAANHILKTREKLNKILAERTGQSIEKIQKDTDRDNFLTADEAKEYGLIDNVMQPEDK.

The active-site Nucleophile is the serine 98. Histidine 123 is an active-site residue.

This sequence belongs to the peptidase S14 family. As to quaternary structure, fourteen ClpP subunits assemble into 2 heptameric rings which stack back to back to give a disk-like structure with a central cavity, resembling the structure of eukaryotic proteasomes.

It is found in the cytoplasm. The catalysed reaction is Hydrolysis of proteins to small peptides in the presence of ATP and magnesium. alpha-casein is the usual test substrate. In the absence of ATP, only oligopeptides shorter than five residues are hydrolyzed (such as succinyl-Leu-Tyr-|-NHMec, and Leu-Tyr-Leu-|-Tyr-Trp, in which cleavage of the -Tyr-|-Leu- and -Tyr-|-Trp bonds also occurs).. Its function is as follows. Cleaves peptides in various proteins in a process that requires ATP hydrolysis. Has a chymotrypsin-like activity. Plays a major role in the degradation of misfolded proteins. This Staphylococcus haemolyticus (strain JCSC1435) protein is ATP-dependent Clp protease proteolytic subunit.